We begin with the raw amino-acid sequence, 584 residues long: Delta 8-(E)-sphingolipid desaturase (584 aa).

Residues 7 to 82 (KKIFTRSQII…FTRFKIGEIE (76 aa)) form the Cytochrome b5 heme-binding domain. 2 residues coordinate heme: histidine 42 and histidine 65. The tract at residues 109-134 (NKNTSNKKTLDSKLDNDSSNSTSDLE) is disordered. A helical transmembrane segment spans residues 261–281 (LFLYSLSFLKINQLFLSAVFM). Positions 293–297 (HDAGH) match the Histidine box-1 motif. The chain crosses the membrane as a helical span at residues 306-326 (IDNIFGMLIADWFGGLSLGWW). The Histidine box-2 signature appears at 330–334 (HNVHH). Helical transmembrane passes span 386–403 (YLYY…YRLS), 423–443 (YFEF…LVFK), and 455–475 (VMVS…SHFA). The Histidine box-3 signature appears at 514-518 (QAIHH).

It belongs to the fatty acid desaturase type 1 family.

The protein localises to the membrane. The catalysed reaction is an N-acylsphing-4-enine + 2 Fe(II)-[cytochrome b5] + O2 + 2 H(+) = a (4E,8E)-4-sphinga-4,8-dienine ceramide + 2 Fe(III)-[cytochrome b5] + 2 H2O. The protein operates within lipid metabolism; sphingolipid metabolism. Its function is as follows. Delta(8)-fatty-acid desaturase which introduces a double bond at the 8-position in the long-chain base (LCB) of ceramides. Required for the formation of the di-unsaturated sphingoid base (E,E)-sphinga-4,8-dienine during glucosylceramide (GluCer) biosynthesis. The polypeptide is Delta 8-(E)-sphingolipid desaturase (Candida albicans (strain SC5314 / ATCC MYA-2876) (Yeast)).